Reading from the N-terminus, the 92-residue chain is MERILYQVFPSDTNYSYDPPAVTAPSQGSSQTDFGKVVIALVVILVSVGVFYLAYTLFLKDCILLFKAKKQRTTTEIGFGQTPARNQDHPGP.

The helical transmembrane segment at 38-58 threads the bilayer; sequence VIALVVILVSVGVFYLAYTLF.

It belongs to the mastrevirus movement protein family. In terms of assembly, interacts with the capsid protein (CP). Part of a MP-CP-viral DNA complex.

Its subcellular location is the host membrane. Functionally, involved in the viral transport within, and between cells. This Phaseolus vulgaris (Kidney bean) protein is Movement protein.